The primary structure comprises 45 residues: Large ribosomal subunit protein bL34 (45 aa).

Belongs to the bacterial ribosomal protein bL34 family.

This Acidothermus cellulolyticus (strain ATCC 43068 / DSM 8971 / 11B) protein is Large ribosomal subunit protein bL34.